We begin with the raw amino-acid sequence, 1225 residues long: Cytosolic carboxypeptidase 1 (1225 aa).

Over residues 366–392 (DDVVDESDDNEDTDAETEAEAENEDSD) the composition is skewed to acidic residues. The tract at residues 366 to 398 (DDVVDESDDNEDTDAETEAEAENEDSDQICKND) is disordered. Residues 842 to 1132 (YPYTYSTLKM…KFCVGLLRLK (291 aa)) form the Peptidase M14 domain. 3 residues coordinate Zn(2+): histidine 914, glutamate 917, and histidine 1011. Residue glutamate 1096 is the Proton donor/acceptor of the active site. Over residues 1181–1193 (YSAESNDDVDPDL) the composition is skewed to acidic residues. The interval 1181 to 1225 (YSAESNDDVDPDLPENIGDFETSTLEEESFSDSEITRTHMSGQST) is disordered.

It belongs to the peptidase M14 family. Zn(2+) is required as a cofactor.

The protein resides in the cytoplasm. It localises to the cytosol. Its subcellular location is the nucleus. It is found in the mitochondrion. It carries out the reaction (L-glutamyl)(n+1)-gamma-L-glutamyl-L-glutamyl-[protein] + H2O = (L-glutamyl)(n)-gamma-L-glutamyl-L-glutamyl-[protein] + L-glutamate. It catalyses the reaction C-terminal L-alpha-aminoacyl-L-glutamyl-L-glutamyl-[tubulin] + H2O = C-terminal L-alpha-aminoacyl-L-glutamyl-[tubulin] + L-glutamate. Metallocarboxypeptidase that mediates protein deglutamylation of tubulin and non-tubulin target proteins. Catalyzes the removal of polyglutamate side chains present on the gamma-carboxyl group of glutamate residues within the C-terminal tail of alpha- and beta-tubulin. Specifically cleaves tubulin long-side-chains, while it is not able to remove the branching point glutamate. Also catalyzes the removal of polyglutamate residues from the carboxy-terminus of alpha-tubulin as well as non-tubulin proteins. The polypeptide is Cytosolic carboxypeptidase 1 (agtpbp1) (Xenopus laevis (African clawed frog)).